A 127-amino-acid polypeptide reads, in one-letter code: Aspartate 1-decarboxylase (127 aa).

Residue Ser25 is the Schiff-base intermediate with substrate; via pyruvic acid of the active site. Ser25 carries the pyruvic acid (Ser) modification. Thr57 serves as a coordination point for substrate. Tyr58 (proton donor) is an active-site residue. A substrate-binding site is contributed by 73–75; that stretch reads GAA.

The protein belongs to the PanD family. Heterooctamer of four alpha and four beta subunits. Pyruvate serves as cofactor. In terms of processing, is synthesized initially as an inactive proenzyme, which is activated by self-cleavage at a specific serine bond to produce a beta-subunit with a hydroxyl group at its C-terminus and an alpha-subunit with a pyruvoyl group at its N-terminus.

Its subcellular location is the cytoplasm. The enzyme catalyses L-aspartate + H(+) = beta-alanine + CO2. Its pathway is cofactor biosynthesis; (R)-pantothenate biosynthesis; beta-alanine from L-aspartate: step 1/1. Functionally, catalyzes the pyruvoyl-dependent decarboxylation of aspartate to produce beta-alanine. The sequence is that of Aspartate 1-decarboxylase from Bacillus velezensis (strain DSM 23117 / BGSC 10A6 / LMG 26770 / FZB42) (Bacillus amyloliquefaciens subsp. plantarum).